Here is a 362-residue protein sequence, read N- to C-terminus: Histidinol-phosphate aminotransferase (362 aa).

K218 is subject to N6-(pyridoxal phosphate)lysine.

This sequence belongs to the class-II pyridoxal-phosphate-dependent aminotransferase family. Histidinol-phosphate aminotransferase subfamily. In terms of assembly, homodimer. It depends on pyridoxal 5'-phosphate as a cofactor.

The catalysed reaction is L-histidinol phosphate + 2-oxoglutarate = 3-(imidazol-4-yl)-2-oxopropyl phosphate + L-glutamate. The protein operates within amino-acid biosynthesis; L-histidine biosynthesis; L-histidine from 5-phospho-alpha-D-ribose 1-diphosphate: step 7/9. This Xanthomonas campestris pv. campestris (strain B100) protein is Histidinol-phosphate aminotransferase.